A 686-amino-acid polypeptide reads, in one-letter code: Eukaryotic translation initiation factor 3 subunit B (686 aa).

The disordered stretch occupies residues 1–29; it reads MAKKHAGADANDSDYNEEPNFEDPPGFVD. The segment covering 11–21 has biased composition (acidic residues); sequence NDSDYNEEPNF. The RRM domain maps to 53 to 137; it reads SVVVVDNIPK…HTFAVNLFTD (85 aa). 5 WD repeats span residues 203 to 242, 289 to 327, 330 to 365, 438 to 480, and 526 to 571; these read TRER…KIQK, DGMS…LLDL, IKIP…TLME, EIRE…KPSL, and PDHF…IKRT. Residues 590–642 adopt a coiled-coil conformation; the sequence is AEEKQKEIKKNLKKYYAVFEQKDRLRLTRASKELLEKRAQLRETFMEYRNKRI.

This sequence belongs to the eIF-3 subunit B family. As to quaternary structure, component of the eukaryotic translation initiation factor 3 (eIF-3) complex. The eIF-3 complex interacts with pix. Interacts with mxt.

It is found in the cytoplasm. Functionally, RNA-binding component of the eukaryotic translation initiation factor 3 (eIF-3) complex, which is involved in protein synthesis of a specialized repertoire of mRNAs and, together with other initiation factors, stimulates binding of mRNA and methionyl-tRNAi to the 40S ribosome. The eIF-3 complex specifically targets and initiates translation of a subset of mRNAs involved in cell proliferation. The sequence is that of Eukaryotic translation initiation factor 3 subunit B from Drosophila ananassae (Fruit fly).